Consider the following 263-residue polypeptide: MGKVILITGASRGIGLQLVKTVIEEDDECIVYGVARTEAGLQSLQREYGADKFVYRVLDITDRSRMEALVEEIRQKHGKLDGIVANAGMLEPVKSISQSNSEHDIKQWERLFDVNFFSIVSLVALCLPLLKSSPFVGNIVFVSSGASVKPYNGWSAYGCSKAALNHFAMDIASEEPSDKVRAVCIAPGVVDTQMQKDIRETLGPQGMTPKALERFTQLYKTSSLLDPKVPAAVLAQLVLKGIPDSLNGQYLRYNDERLGPVQG.

The NADP(+) site is built by isoleucine 7 and asparagine 86. Catalysis depends on serine 143, which acts as the Proton donor. NADP(+) contacts are provided by tyrosine 157, lysine 161, valine 190, and threonine 192. Tyrosine 157 acts as the Proton acceptor in catalysis. The active-site Lowers pKa of active site Tyr is the lysine 161.

This sequence belongs to the short-chain dehydrogenases/reductases (SDR) family.

The enzyme catalyses (S)-benzoin + NADP(+) = benzil + NADPH + H(+). The catalysed reaction is 2-hydroxy-1-phenyl-1-propanone + NADP(+) = 1-phenyl-1,2-propanedione + NADPH + H(+). Its function is as follows. Reduces benzil stereospecifically to (S)-benzoin. Also reduces 1-phenyl-1,2-propanedione to 2-hydroxy-1-phenyl-1-propanone. Is probably involved in a pathway contributing to genomic integrity. The chain is Benzil reductase ((S)-benzoin forming) IRC24 (IRC24) from Saccharomyces cerevisiae (strain ATCC 204508 / S288c) (Baker's yeast).